A 62-amino-acid chain; its full sequence is Bacteriocin piscicolin-126 (62 aa).

Positions 1-18 are excised as a propeptide; sequence MKTVKELSVKEMQLTTGG. The cysteines at positions 27 and 32 are disulfide-linked.

The protein localises to the secreted. Functionally, inhibits the growth of several Gram-positive bacteria, especially the food-borne pathogen L.monocytogenes, but has no effect on the growth of a number of yeasts and Gram-negative bacteria. This is Bacteriocin piscicolin-126 (pisA) from Carnobacterium maltaromaticum (Carnobacterium piscicola).